The primary structure comprises 383 residues: Adaptive-response sensory kinase SasA (383 aa).

Residues 161–383 (MLAHDLRSPL…SFHFTLPVYR (223 aa)) form the Histidine kinase domain. A Phosphohistidine; by autocatalysis modification is found at H164.

In terms of assembly, homooligomerizes. Interacts with KaiC1. Interacts with KaiC1 and RpaA. Binds to the B-loop in the CI domain of KaiC; SasA and KaiB compete to bind to the CI domain.

The catalysed reaction is ATP + protein L-histidine = ADP + protein N-phospho-L-histidine.. Its function is as follows. Member of the two-component regulatory system SasA/RpaA involved in genome-wide circadian gene expression. One of several clock output pathways. Participates in the Kai clock protein complex, the main circadian regulator in cyanobacteria, via its interaction with KaiC. KaiC enhances the autophosphorylation activity of SasA, which then transfers its phosphate group to RpaA to activate it. In addition to its output function, recruits fold-shifted KaiB (KaiB(fs)) to KaiC to cooperatively form the KaiB(6):KaiC(6) complex (independent of SasA kinase activity). Required for robustness of the circadian rhythm of gene expression and is involved in clock output, also required for adaptation to light/dark cycles. Functionally, plays an important role in glucose metabolism, important for expression of genes involved in glycolysis, gluconeogenesis, the oxidative pentose phosphate pathway, and glycogen metabolism. Required for heterotrophic growth. Overexpression from the psbAII promoter leads to altered levels of genes involved in carbon metabolism, increased levels of transcripts for clock oscillator genes in the light and the dark, complete loss of glycogen accumulation, decreased levels of metabolites of sugar catabolism and increased levels of amino acids in the light and increased levels of SigE protein. The chain is Adaptive-response sensory kinase SasA from Synechocystis sp. (strain ATCC 27184 / PCC 6803 / Kazusa).